The chain runs to 362 residues: G-protein coupled receptor 6 (362 aa).

At 1 to 74 (MNASAASLND…PGLLLPAVNP (74 aa)) the chain is on the extracellular side. Asparagine 2, asparagine 9, and asparagine 51 each carry an N-linked (GlcNAc...) asparagine glycan. The chain crosses the membrane as a helical span at residues 75–94 (WDVLLCVSGTVIAGENALVV). The Cytoplasmic portion of the chain corresponds to 95-106 (ALIASTPALRTP). The chain crosses the membrane as a helical span at residues 107–130 (MFVLVGSLATADLLAGCGLILHFV). Residues 131-142 (FQYLVPSETVSL) lie on the Extracellular side of the membrane. The helical transmembrane segment at 143 to 164 (LTVGFLVASFAASVSSLLAITV) threads the bilayer. Residues 165–185 (DRYLSLYNALTYYSRRTLLGV) are Cytoplasmic-facing. The helical transmembrane segment at 186 to 205 (HLLLAATWTVSLGLGLLPVL) threads the bilayer. At 206–230 (GWNCLAERAACSVVRPLARSHVALL) the chain is on the extracellular side. Residues 231–249 (SAAFFMVFGIMLHLYVRIC) traverse the membrane as a helical segment. The Cytoplasmic portion of the chain corresponds to 250 to 277 (QVVWRHAHQIALQQHCLAPPHLAATRKG). A helical transmembrane segment spans residues 278 to 304 (VGTLAVVLGTFGASWLPFAIYCVVGSH). At 305–309 (EDPAV) the chain is on the extracellular side. A helical membrane pass occupies residues 310 to 331 (YTYATLLPATYNSMINPIIYAF). Topologically, residues 332–362 (RNQEIQRALWLLLCGCFQSKVPFRSRSPSEV) are cytoplasmic. Residue cysteine 345 is the site of S-palmitoyl cysteine attachment. Phosphoserine is present on residues serine 356, serine 358, and serine 360.

Belongs to the G-protein coupled receptor 1 family.

Its subcellular location is the cell membrane. In terms of biological role, orphan receptor with constitutive G(s) signaling activity that activate cyclic AMP. Promotes neurite outgrowth and blocks myelin inhibition in neurons. The polypeptide is G-protein coupled receptor 6 (GPR6) (Homo sapiens (Human)).